A 291-amino-acid polypeptide reads, in one-letter code: m-AAA protease-interacting protein 1, mitochondrial (291 aa).

A mitochondrion-targeting transit peptide spans 1-96 (MALAVRLLPR…TFPSCPRRTY (96 aa)).

As to quaternary structure, interacts with AFG3L2. Interacts with SPG7. Interacts with SMDT1/EMRE (via the N-terminal transit peptide); interaction is direct and takes place before maturation of SMDT1/EMRE.

Its subcellular location is the mitochondrion matrix. Its function is as follows. Promotes sorting of SMDT1/EMRE in mitochondria by ensuring its maturation. Interacts with the transit peptide region of SMDT1/EMRE precursor protein in the mitochondrial matrix, leading to protect it against protein degradation by YME1L1, thereby ensuring SMDT1/EMRE maturation by the mitochondrial processing peptidase (PMPCA and PMPCB). The polypeptide is m-AAA protease-interacting protein 1, mitochondrial (Bos taurus (Bovine)).